We begin with the raw amino-acid sequence, 252 residues long: uncharacterized protein (252 aa).

S195 and S209 each carry phosphoserine.

In terms of tissue distribution, testis-specific. Highly expressed in spermatocytes (at protein level).

In terms of biological role, essential for normal spermatogenesis and male fertility. This is an uncharacterized protein from Mus musculus (Mouse).